Reading from the N-terminus, the 409-residue chain is L-cysteine:1D-myo-inositol 2-amino-2-deoxy-alpha-D-glucopyranoside ligase (409 aa).

C25 contacts Zn(2+). L-cysteinyl-5'-AMP-binding positions include 25–28, T40, and 63–65; these read CGIT and NVT. A 'HIGH' region motif is present at residues 27–37; the sequence is ITPYDATHIGH. Residues 179-184 carry the 'ERGGDP' region motif; that stretch reads ERGGDP. L-cysteinyl-5'-AMP is bound at residue W219. Position 223 (C223) interacts with Zn(2+). 241–243 contacts L-cysteinyl-5'-AMP; the sequence is GSD. Position 248 (H248) interacts with Zn(2+). L-cysteinyl-5'-AMP is bound at residue V274. The 'KMSKS' region signature appears at 280–284; sequence KMSKS.

This sequence belongs to the class-I aminoacyl-tRNA synthetase family. MshC subfamily. Monomer. It depends on Zn(2+) as a cofactor.

It catalyses the reaction 1D-myo-inositol 2-amino-2-deoxy-alpha-D-glucopyranoside + L-cysteine + ATP = 1D-myo-inositol 2-(L-cysteinylamino)-2-deoxy-alpha-D-glucopyranoside + AMP + diphosphate + H(+). Its function is as follows. Catalyzes the ATP-dependent condensation of GlcN-Ins and L-cysteine to form L-Cys-GlcN-Ins. The chain is L-cysteine:1D-myo-inositol 2-amino-2-deoxy-alpha-D-glucopyranoside ligase from Clavibacter sepedonicus (Clavibacter michiganensis subsp. sepedonicus).